The sequence spans 739 residues: MSLMLEPNPTQIKEERIYAEMGLTDEEFAMVEKILGRLPNYTETGLFSVMWSEHCSYKNSKPVLRKFPTTGERVLQGPGEGAGIVDIGDNQAVVFKMESHNHPSAIEPYQGAATGVGGIIRDVFSMGARPVALLNSLRFGELQSPRVKYLFEEVVAGIAGYGNCIGIPTVGGEVQFDPCYEGNPLVNAMCVGLINHEDIKKGQAHGAGNTVMYVGASTGRDGIHGATFASEELSESSEAKRPAVQVGDPFMEKLLIEACLELIQSDALVGIQDMGAAGLTSSSAEMASKAGMGIEMYLDDVPQRETGMTPYEMMLSESQERMLIVVKKGREQEIVDLFEKYGLAAVTMGKVTEDKMLRLFHKGEMVAEVPADALAEEAPIYHKPSKEAAYFAEFQQMKMETPKIENYKETLFALLQQPTIASKEWVYDQYDYQVRTSTVVTPGSDAAVVRVRGTEKGLAMTTDCNSRYIYLDPEMGGKIAVAEAARNIVCSGGEPLAITDCLNFGNPEKPEIFWQIEKSVDGMSEACRTLQTPVIGGNVSMYNERSGEAVYPTPTVGMVGLVHDLKHVTTQEFKQAGDLVYVIGETKAEFGGSELQKMLHGKIFGQSPSIDLGVELKRQKQVLAAIQAGLVQSAHDVAEGGLAVAISESAIGANGLGATVKLDGEATAALFAESQSRFVITVKRENKEVFEKAVEAIQVGEVTNTNEVTIHNEENEVLLTANVDEMRKAWKGAIPCLLK.

Residue histidine 54 is part of the active site. 2 residues coordinate ATP: tyrosine 57 and lysine 96. Glutamate 98 contributes to the Mg(2+) binding site. Substrate contacts are provided by residues 99 to 102 and arginine 121; that span reads SHNH. Histidine 100 serves as the catalytic Proton acceptor. Residue aspartate 122 participates in Mg(2+) binding. Glutamine 245 contacts substrate. Aspartate 273 contacts Mg(2+). Residue 317–319 coordinates substrate; it reads ESQ. Aspartate 500 and glycine 537 together coordinate ATP. Asparagine 538 serves as a coordination point for Mg(2+). Serine 540 serves as a coordination point for substrate.

It belongs to the FGAMS family. As to quaternary structure, monomer. Part of the FGAM synthase complex composed of 1 PurL, 1 PurQ and 2 PurS subunits.

The protein resides in the cytoplasm. It carries out the reaction N(2)-formyl-N(1)-(5-phospho-beta-D-ribosyl)glycinamide + L-glutamine + ATP + H2O = 2-formamido-N(1)-(5-O-phospho-beta-D-ribosyl)acetamidine + L-glutamate + ADP + phosphate + H(+). It participates in purine metabolism; IMP biosynthesis via de novo pathway; 5-amino-1-(5-phospho-D-ribosyl)imidazole from N(2)-formyl-N(1)-(5-phospho-D-ribosyl)glycinamide: step 1/2. Part of the phosphoribosylformylglycinamidine synthase complex involved in the purines biosynthetic pathway. Catalyzes the ATP-dependent conversion of formylglycinamide ribonucleotide (FGAR) and glutamine to yield formylglycinamidine ribonucleotide (FGAM) and glutamate. The FGAM synthase complex is composed of three subunits. PurQ produces an ammonia molecule by converting glutamine to glutamate. PurL transfers the ammonia molecule to FGAR to form FGAM in an ATP-dependent manner. PurS interacts with PurQ and PurL and is thought to assist in the transfer of the ammonia molecule from PurQ to PurL. The protein is Phosphoribosylformylglycinamidine synthase subunit PurL of Bacillus cereus (strain ZK / E33L).